A 71-amino-acid chain; its full sequence is Sec-independent protein translocase protein TatA (71 aa).

The chain crosses the membrane as a helical span at residues 1-21; the sequence is MGSFSMGHWLIVLAIIVLLFG. Basic and acidic residues predominate over residues 41 to 57; that stretch reads KEMEDETPVEKIEKADS. A disordered region spans residues 41–71; sequence KEMEDETPVEKIEKADSETQSTKQNETTKNV. Residues 58–71 show a composition bias toward polar residues; the sequence is ETQSTKQNETTKNV.

It belongs to the TatA/E family. In terms of assembly, the Tat system comprises two distinct complexes: a TatABC complex, containing multiple copies of TatA, TatB and TatC subunits, and a separate TatA complex, containing only TatA subunits. Substrates initially bind to the TatABC complex, which probably triggers association of the separate TatA complex to form the active translocon.

Its subcellular location is the cell inner membrane. In terms of biological role, part of the twin-arginine translocation (Tat) system that transports large folded proteins containing a characteristic twin-arginine motif in their signal peptide across membranes. TatA could form the protein-conducting channel of the Tat system. The polypeptide is Sec-independent protein translocase protein TatA (Campylobacter fetus subsp. fetus (strain 82-40)).